Reading from the N-terminus, the 156-residue chain is Small ribosomal subunit protein uS7 (156 aa).

The protein belongs to the universal ribosomal protein uS7 family. In terms of assembly, part of the 30S ribosomal subunit. Contacts proteins S9 and S11.

Functionally, one of the primary rRNA binding proteins, it binds directly to 16S rRNA where it nucleates assembly of the head domain of the 30S subunit. Is located at the subunit interface close to the decoding center, probably blocks exit of the E-site tRNA. The protein is Small ribosomal subunit protein uS7 of Azorhizobium caulinodans (strain ATCC 43989 / DSM 5975 / JCM 20966 / LMG 6465 / NBRC 14845 / NCIMB 13405 / ORS 571).